The primary structure comprises 197 residues: FMN-dependent NADH:quinone oxidoreductase (197 aa).

Residues S10, 16–18, 93–96, and 137–140 contribute to the FMN site; these read SQS, MYNF, and TRGG.

The protein belongs to the azoreductase type 1 family. In terms of assembly, homodimer. The cofactor is FMN.

The catalysed reaction is 2 a quinone + NADH + H(+) = 2 a 1,4-benzosemiquinone + NAD(+). It carries out the reaction N,N-dimethyl-1,4-phenylenediamine + anthranilate + 2 NAD(+) = 2-(4-dimethylaminophenyl)diazenylbenzoate + 2 NADH + 2 H(+). Its function is as follows. Quinone reductase that provides resistance to thiol-specific stress caused by electrophilic quinones. Functionally, also exhibits azoreductase activity. Catalyzes the reductive cleavage of the azo bond in aromatic azo compounds to the corresponding amines. The sequence is that of FMN-dependent NADH:quinone oxidoreductase from Shewanella denitrificans (strain OS217 / ATCC BAA-1090 / DSM 15013).